The primary structure comprises 240 residues: Allene oxide cyclase, chloroplastic (240 aa).

The transit peptide at 1-49 (MAAAAPSRVSVRAAAPGQTGGFAKIRPQVVVAAAARSAGVSGRRARSVR) directs the protein to the chloroplast.

This sequence belongs to the allene oxide cyclase family.

The protein resides in the plastid. It localises to the chloroplast. It carries out the reaction (9Z,13S,15Z)-12,13-epoxyoctadeca-9,11,15-trienoate = (9S,13S,15Z)-12-oxophyto-10,15-dienoate. It participates in lipid metabolism; polyunsaturated fatty acid biosynthesis. Involved in the production of 12-oxo-phytodienoic acid (OPDA), a precursor of jasmonic acid (JA). Required for the production of JA in response to wounding. Necessary for flower and coleoptile development regulation by light, including blue (BL), red (RL) and far red (FR) lights. Involved in the auxin-mediated signaling pathway leading to growth stimulation. Essential for photodestruction of phyA upon activation by RL and FR. Implicated in responses to salt stress (NaCl). Its function is as follows. Confers resistance to incompatible strains of the blast fungus Magnaporthe grisea, jasmonic acid (JA) thus playing a significant role in the resistance to fungal infection. Implicated in riboflavin-induced resistance to the sheath blight Rhizoctonia solani. Required for Pseudomonas fluorescens-mediated JA-dependent induced systemic resistance (ISR). Confers some resistance, independently of the JA pathway but probably via OPDA accumulation, to brown planthopper (BPH, Nilaparvata lugens), a destructive, monophagous, piercing-sucking insect, mainly by reducing its feeding activity and survival rate. Triggers resistance to the chewing insect striped stem borer (SSB) Chilo suppressalis, to the root hemiparasite witchweed Striga hermonthica, and to the root feeder insect rice water weevil Lissorhoptrus oryzophilus, in a JA-dependent manner, by attenuating both the growth mass and growth rate of caterpillars. The polypeptide is Allene oxide cyclase, chloroplastic (Oryza sativa subsp. indica (Rice)).